The following is a 285-amino-acid chain: Golgi to ER traffic protein 2 (285 aa).

The span at 1-10 (MSELTEAEKR) shows a compositional bias: basic and acidic residues. The interval 1–71 (MSELTEAEKR…HSATPDIKED (71 aa)) is disordered. N-acetylserine is present on serine 2. Residues 2–148 (SELTEAEKRR…LDYHDYLLNR (147 aa)) lie on the Cytoplasmic side of the membrane. The span at 11–20 (RLLRERRQKK) shows a compositional bias: basic residues. Over residues 24–42 (GGASSRLNKITGQASSHLN) the composition is skewed to polar residues. At serine 45 the chain carries Phosphoserine. Residues 49–60 (APSAAKATPPAS) are compositionally biased toward low complexity. Residues 149-169 (LKAWTILVKWVFFLLPYLYLI) traverse the membrane as a helical segment. Over 170-196 (TRPNSSVWPAYAFTQSAWFAPLRNPSN) the chain is Lumenal. N-linked (GlcNAc...) asparagine glycans are attached at residues asparagine 173 and asparagine 196. The chain crosses the membrane as a helical span at residues 197 to 216 (FTRIFATFEFLSISIYYQLL). The Cytoplasmic portion of the chain corresponds to 217–263 (KNVEHKSKIKNLQDTNKLVKLVSLVPEGVIPVANLKGKLITLLQYWD). A helical membrane pass occupies residues 264 to 284 (LLSMLITDISFVLIVLGLLTY). A topological domain (lumenal) is located at residue leucine 285.

This sequence belongs to the GET2 family. As to quaternary structure, component of the Golgi to ER traffic (GET) complex, which is composed of GET1, GET2 and GET3. Within the complex, GET1 and GET2 form a heterotetramer which is stabilized by phosphatidylinositol binding and which binds to the GET3 homodimer.

The protein resides in the endoplasmic reticulum membrane. The protein localises to the golgi apparatus membrane. In terms of biological role, required for the post-translational delivery of tail-anchored (TA) proteins to the endoplasmic reticulum. Together with GET1, acts as a membrane receptor for soluble GET3, which recognizes and selectively binds the transmembrane domain of TA proteins in the cytosol. The GET complex cooperates with the HDEL receptor ERD2 to mediate the ATP-dependent retrieval of resident ER proteins that contain a C-terminal H-D-E-L retention signal from the Golgi to the ER. Involved in DNA replication and DNA damage response and also in cell wall function. This chain is Golgi to ER traffic protein 2, found in Saccharomyces cerevisiae (strain YJM789) (Baker's yeast).